The sequence spans 432 residues: UDP-glucosyltransferase B1 (432 aa).

The protein belongs to the UDP-glycosyltransferase family.

It catalyses the reaction (9Z)-17-hydroxyoctadec-9-enoate 17-O-beta-D-glucoside + UDP-alpha-D-glucose = (9Z)-17-hydroxyoctadec-9-enoate 17-O-sophoroside + UDP + H(+). In terms of biological role, catalyzes the second glycosylation step of sophorolipid biosynthesis, the further glucosylation of the previoulsy formed glucolipid to give rise to an acidic sophorolipid. The sequence is that of UDP-glucosyltransferase B1 from Starmerella bombicola (Yeast).